Here is a 968-residue protein sequence, read N- to C-terminus: Isoleucine--tRNA ligase (968 aa).

The 'HIGH' region motif lies at Pro-68–His-78. Glu-584 serves as a coordination point for L-isoleucyl-5'-AMP. A 'KMSKS' region motif is present at residues Lys-625 to Ser-629. ATP is bound at residue Lys-628. Residues Cys-938, Cys-941, Cys-958, and Cys-961 each coordinate Zn(2+).

Belongs to the class-I aminoacyl-tRNA synthetase family. IleS type 1 subfamily. In terms of assembly, monomer. It depends on Zn(2+) as a cofactor.

The protein resides in the cytoplasm. It catalyses the reaction tRNA(Ile) + L-isoleucine + ATP = L-isoleucyl-tRNA(Ile) + AMP + diphosphate. Its function is as follows. Catalyzes the attachment of isoleucine to tRNA(Ile). As IleRS can inadvertently accommodate and process structurally similar amino acids such as valine, to avoid such errors it has two additional distinct tRNA(Ile)-dependent editing activities. One activity is designated as 'pretransfer' editing and involves the hydrolysis of activated Val-AMP. The other activity is designated 'posttransfer' editing and involves deacylation of mischarged Val-tRNA(Ile). This Prochlorococcus marinus (strain MIT 9313) protein is Isoleucine--tRNA ligase.